The chain runs to 170 residues: Viral interleukin-10 homolog (170 aa).

The first 23 residues, 1 to 23, serve as a signal peptide directing secretion; the sequence is MERRLVVTLQCLVLLYLAPECGG. 2 cysteine pairs are disulfide-bonded: cysteine 27–cysteine 119 and cysteine 73–cysteine 125. Positions 97–145 form a coiled coil; sequence EAKDHVNSLGENLKTLRLRLRRCHRFLPCENKSKAVEQIKNAFNKLQEK. A glycan (N-linked (GlcNAc...) asparagine; by host) is linked at asparagine 127.

Belongs to the IL-10 family. Homodimer.

The protein resides in the secreted. In terms of biological role, inhibits IFN-gamma synthesis. Down-regulates the expression of the host TAP1 gene (transporter associated with antigen processing), thereby affecting the transport of peptides into the endoplasmic reticulum and subsequent peptide loading by MHC class I molecules. In consequence, infected cells are masked for immune recognition by cytotoxic T-lymphocytes. This chain is Viral interleukin-10 homolog, found in Epstein-Barr virus (strain AG876) (HHV-4).